Here is a 351-residue protein sequence, read N- to C-terminus: Heat-inducible transcription repressor HrcA (351 aa).

This sequence belongs to the HrcA family.

Its function is as follows. Negative regulator of class I heat shock genes (grpE-dnaK-dnaJ and groELS operons). Prevents heat-shock induction of these operons. This is Heat-inducible transcription repressor HrcA from Fusobacterium nucleatum subsp. nucleatum (strain ATCC 25586 / DSM 15643 / BCRC 10681 / CIP 101130 / JCM 8532 / KCTC 2640 / LMG 13131 / VPI 4355).